The sequence spans 232 residues: Ubiquinone biosynthesis O-methyltransferase (232 aa).

S-adenosyl-L-methionine-binding residues include Arg36, Gly55, Asp76, and Met120.

The protein belongs to the methyltransferase superfamily. UbiG/COQ3 family.

The catalysed reaction is a 3-demethylubiquinol + S-adenosyl-L-methionine = a ubiquinol + S-adenosyl-L-homocysteine + H(+). It catalyses the reaction a 3-(all-trans-polyprenyl)benzene-1,2-diol + S-adenosyl-L-methionine = a 2-methoxy-6-(all-trans-polyprenyl)phenol + S-adenosyl-L-homocysteine + H(+). Its pathway is cofactor biosynthesis; ubiquinone biosynthesis. In terms of biological role, O-methyltransferase that catalyzes the 2 O-methylation steps in the ubiquinone biosynthetic pathway. This Paraburkholderia xenovorans (strain LB400) protein is Ubiquinone biosynthesis O-methyltransferase.